A 448-amino-acid polypeptide reads, in one-letter code: ATP-dependent protease ATPase subunit HslU (448 aa).

Residues valine 21, 63–68, aspartate 260, glutamate 326, and arginine 398 each bind ATP; that span reads GVGKTE.

This sequence belongs to the ClpX chaperone family. HslU subfamily. A double ring-shaped homohexamer of HslV is capped on each side by a ring-shaped HslU homohexamer. The assembly of the HslU/HslV complex is dependent on binding of ATP.

It localises to the cytoplasm. Functionally, ATPase subunit of a proteasome-like degradation complex; this subunit has chaperone activity. The binding of ATP and its subsequent hydrolysis by HslU are essential for unfolding of protein substrates subsequently hydrolyzed by HslV. HslU recognizes the N-terminal part of its protein substrates and unfolds these before they are guided to HslV for hydrolysis. The protein is ATP-dependent protease ATPase subunit HslU of Sulfurihydrogenibium sp. (strain YO3AOP1).